Reading from the N-terminus, the 80-residue chain is Trefoil factor 3 (80 aa).

A signal peptide spans 1–21; that stretch reads MEARVLWLLALVLALGSSSLA. In terms of domain architecture, P-type spans 30 to 73; sequence NLCAVPAKNRVDCGYPEISPEQCVNRGCCFDSSIPEVPWCFKPL. 3 disulfide bridges follow: Cys-32–Cys-58, Cys-42–Cys-57, and Cys-52–Cys-69.

In terms of assembly, monomer. Homodimer; disulfide-linked.

Its subcellular location is the secreted. The protein resides in the extracellular space. The protein localises to the extracellular matrix. It is found in the cytoplasm. Functionally, involved in the maintenance and repair of the intestinal mucosa. Promotes the mobility of epithelial cells in healing processes (motogen). The sequence is that of Trefoil factor 3 (TFF3) from Felis catus (Cat).